We begin with the raw amino-acid sequence, 61 residues long: Large ribosomal subunit protein bL28 (61 aa).

It belongs to the bacterial ribosomal protein bL28 family.

This Lactobacillus johnsonii (strain CNCM I-12250 / La1 / NCC 533) protein is Large ribosomal subunit protein bL28.